Here is a 1329-residue protein sequence, read N- to C-terminus: BRCT domain-containing protein At4g02110 (1329 aa).

2 consecutive BRCT domains span residues Leu7–Tyr97 and Asn104–Ile194. Disordered regions lie at residues Ala295–Arg378, Gly393–Leu470, Glu576–Asp645, Asn745–Lys827, and Ala952–Lys1077. Polar residues-rich tracts occupy residues Ser323 to Ser335 and Ser363 to Arg378. 2 stretches are compositionally biased toward basic and acidic residues: residues Val410–Ser422 and Arg600–Thr611. Over residues Gly793–Ile802 the composition is skewed to basic residues. Composition is skewed to basic and acidic residues over residues Asp818 to Lys827 and Asp971 to Val983. Positions Ser986–Ser1004 are enriched in low complexity. Over residues Val1024–Lys1047 the composition is skewed to basic and acidic residues. Residues Phe1090–Trp1181 form the BRCT 3 domain.

The polypeptide is BRCT domain-containing protein At4g02110 (Arabidopsis thaliana (Mouse-ear cress)).